Consider the following 232-residue polypeptide: Ribose-5-phosphate isomerase A (232 aa).

Residues 28 to 31 (TGST), 83 to 86 (DGAD), and 96 to 99 (KGGG) each bind substrate. The active-site Proton acceptor is Glu-105. Substrate is bound at residue Lys-123.

Belongs to the ribose 5-phosphate isomerase family. As to quaternary structure, homodimer.

It catalyses the reaction aldehydo-D-ribose 5-phosphate = D-ribulose 5-phosphate. It functions in the pathway carbohydrate degradation; pentose phosphate pathway; D-ribose 5-phosphate from D-ribulose 5-phosphate (non-oxidative stage): step 1/1. Its function is as follows. Catalyzes the reversible conversion of ribose-5-phosphate to ribulose 5-phosphate. The chain is Ribose-5-phosphate isomerase A from Rhizobium etli (strain ATCC 51251 / DSM 11541 / JCM 21823 / NBRC 15573 / CFN 42).